A 69-amino-acid polypeptide reads, in one-letter code: Putative membrane protein insertion efficiency factor (69 aa).

It belongs to the UPF0161 family.

It localises to the cell membrane. Functionally, could be involved in insertion of integral membrane proteins into the membrane. This is Putative membrane protein insertion efficiency factor from Alkaliphilus oremlandii (strain OhILAs) (Clostridium oremlandii (strain OhILAs)).